A 324-amino-acid chain; its full sequence is Delta-aminolevulinic acid dehydratase (324 aa).

Cysteine 120, cysteine 122, and cysteine 130 together coordinate Zn(2+). The active-site Schiff-base intermediate with substrate is lysine 195. Residues arginine 205 and arginine 217 each contribute to the 5-aminolevulinate site. Glutamate 233 serves as a coordination point for Mg(2+). Catalysis depends on lysine 248, which acts as the Schiff-base intermediate with substrate. Residues serine 274 and tyrosine 313 each coordinate 5-aminolevulinate.

It belongs to the ALAD family. Homooctamer. Zn(2+) is required as a cofactor.

The catalysed reaction is 2 5-aminolevulinate = porphobilinogen + 2 H2O + H(+). Its pathway is porphyrin-containing compound metabolism; protoporphyrin-IX biosynthesis; coproporphyrinogen-III from 5-aminolevulinate: step 1/4. Its function is as follows. Catalyzes an early step in the biosynthesis of tetrapyrroles. Binds two molecules of 5-aminolevulinate per subunit, each at a distinct site, and catalyzes their condensation to form porphobilinogen. The sequence is that of Delta-aminolevulinic acid dehydratase (hemB) from Bacillus subtilis (strain 168).